Reading from the N-terminus, the 514-residue chain is Arabinose import ATP-binding protein AraG (514 aa).

ABC transporter domains are found at residues 16-251 and 251-507; these read LRFN…MVGR and RDIQ…LPRH. 48–55 serves as a coordination point for ATP; it reads GENGAGKS.

This sequence belongs to the ABC transporter superfamily. Arabinose importer (TC 3.A.1.2.2) family. As to quaternary structure, the complex is composed of two ATP-binding proteins (AraG), two transmembrane proteins (AraH) and a solute-binding protein (AraF).

The protein resides in the cell inner membrane. The catalysed reaction is L-arabinose(out) + ATP + H2O = L-arabinose(in) + ADP + phosphate + H(+). In terms of biological role, part of the ABC transporter complex AraFGH involved in arabinose import. Responsible for energy coupling to the transport system. This Pseudomonas fluorescens (strain Pf0-1) protein is Arabinose import ATP-binding protein AraG.